The following is a 399-amino-acid chain: Ribose-phosphate pyrophosphokinase 2, chloroplastic (399 aa).

The N-terminal 32 residues, Met1–Arg32, are a transit peptide targeting the chloroplast. 4 residues coordinate Mg(2+): Asp214, His216, Asp225, and Asp229. The binding of phosphoribosylpyrophosphate stretch occupies residues Gly299–Thr314.

The protein belongs to the ribose-phosphate pyrophosphokinase family. It depends on Mg(2+) as a cofactor.

It localises to the plastid. The protein resides in the chloroplast. It carries out the reaction D-ribose 5-phosphate + ATP = 5-phospho-alpha-D-ribose 1-diphosphate + AMP + H(+). The polypeptide is Ribose-phosphate pyrophosphokinase 2, chloroplastic (Oryza sativa subsp. japonica (Rice)).